A 499-amino-acid polypeptide reads, in one-letter code: Glycerol kinase (499 aa).

Thr13 contributes to the ADP binding site. ATP-binding residues include Thr13, Thr14, and Ser15. A sn-glycerol 3-phosphate-binding site is contributed by Thr13. Arg17 lines the ADP pocket. Sn-glycerol 3-phosphate contacts are provided by Arg83, Glu84, Tyr135, and Asp245. Glycerol-binding residues include Arg83, Glu84, Tyr135, Asp245, and Gln246. ADP-binding residues include Thr267 and Gly310. The ATP site is built by Thr267, Gly310, Gln314, and Ala411. Ala411 and Asn415 together coordinate ADP.

It belongs to the FGGY kinase family.

The enzyme catalyses glycerol + ATP = sn-glycerol 3-phosphate + ADP + H(+). It participates in polyol metabolism; glycerol degradation via glycerol kinase pathway; sn-glycerol 3-phosphate from glycerol: step 1/1. Inhibited by fructose 1,6-bisphosphate (FBP). Its function is as follows. Key enzyme in the regulation of glycerol uptake and metabolism. Catalyzes the phosphorylation of glycerol to yield sn-glycerol 3-phosphate. The polypeptide is Glycerol kinase (Xylella fastidiosa (strain M12)).